The sequence spans 305 residues: Heterogeneous nuclear ribonucleoprotein A0 (305 aa).

At methionine 1 the chain carries N-acetylmethionine. The RRM 1 domain occupies 7 to 86 (CKLFIGGLNV…VELKRAVSRE (80 aa)). Serine 68 carries the phosphoserine modification. Lysine 80 is covalently cross-linked (Glycyl lysine isopeptide (Lys-Gly) (interchain with G-Cter in SUMO2)). The residue at position 84 (serine 84) is a Phosphoserine; by MAPKAPK2. Glycyl lysine isopeptide (Lys-Gly) (interchain with G-Cter in SUMO2) cross-links involve residues lysine 96, lysine 98, lysine 99, and lysine 106. Positions 98-175 (KKLFVGGLKG…HRVEVKKAVP (78 aa)) constitute an RRM 2 domain. Lysine 133 carries the post-translational modification N6-acetyllysine. Arginine 139 is subject to Omega-N-methylarginine. Glycyl lysine isopeptide (Lys-Gly) (interchain with G-Cter in SUMO2) cross-links involve residues lysine 154, lysine 159, lysine 172, and lysine 176. Disordered stretches follow at residues 178 to 211 (DIHAGGGGARAARGGRGGGRGRGGGGGGGGRDQN) and 265 to 305 (QSSY…GGSF). Gly residues-rich tracts occupy residues 181-211 (AGGGGARAARGGRGGGRGRGGGGGGGGRDQN) and 272-284 (KSGGGGGGGGSWG). The residue at position 286 (arginine 286) is an Omega-N-methylarginine. Residues 292–305 (YRGGYGGGYGGGSF) show a composition bias toward gly residues. At arginine 293 the chain carries Asymmetric dimethylarginine; alternate. Arginine 293 carries the post-translational modification Dimethylated arginine; alternate. Arginine 293 carries the post-translational modification Omega-N-methylarginine; alternate.

Phosphorylated at Ser-84 by MAPKAPK2 in response to LPS treatment, promoting stabilization of GADD45A mRNA. Post-translationally, arg-293 is dimethylated, probably to asymmetric dimethylarginine.

It is found in the nucleus. Its function is as follows. mRNA-binding component of ribonucleosomes. Specifically binds AU-rich element (ARE)-containing mRNAs. Involved in post-transcriptional regulation of cytokines mRNAs. The polypeptide is Heterogeneous nuclear ribonucleoprotein A0 (Hnrnpa0) (Mus musculus (Mouse)).